The following is a 218-amino-acid chain: Tubulin polymerization-promoting protein (218 aa).

Positions 1–46 (MADSKAKPAKAANKTPPKSPGDPARAAKRLSLESEGANEGATAAPE) are disordered. Positions 1–115 (MADSKAKPAK…SCRTITFEQF (115 aa)) are mediates interaction with LIMK1. Thr15 bears the Phosphothreonine mark. 3 positions are modified to phosphoserine: Ser19, Ser31, and Ser34. A Phosphothreonine modification is found at Thr42. Zn(2+)-binding residues include His60, His71, Cys79, and Cys82. Phosphothreonine is present on Thr91. Ser106 is modified (phosphoserine). Residue Ser151 is glycosylated (O-linked (GlcNAc) serine). Ser158 and Ser159 each carry phosphoserine. The segment at 166-192 (TDTSKFTGSHKERFDQSGKGKGKAGRV) is disordered. Basic and acidic residues predominate over residues 174–183 (SHKERFDQSG).

It belongs to the TPPP family. Homodimer. Binds tubulin; binding is inhibited by GTP. Interacts with MAPK1. Interacts with GAPDH; the interaction is direct. Interacts with LIMK1 (via the PDZ domain); the interaction is direct. Interacts with LIMK2. Interacts with HDAC6; thereby inhibiting the tubulin deacetylase activity of HDAC6. Interacts with aggregated SNCA; may have a pro-aggregatory role in synucleinopathies. Interacts with DYNLL1. Interacts (via C-terminus) with S100A2, S100A6 and S100B; these interactions inhibit TPPP dimerization. Mg(2+) serves as cofactor. Phosphorylated by LIMK1 on serine residues; phosphorylation may alter the tubulin polymerization activity. Phosphorylation by LIMK2, but not LIMK1, regulates astral microtubule organization at early stage of mitosis. Phosphorylation by ROCK1 at Ser-31, Ser-106 and Ser-158 inhibits interaction with HDAC6, resulting in decreased acetylation of tubulin, increased cell motility and entry into S-phase. Phosphorylation by CDK1 inhibits the microtubule polymerizing activity. In terms of processing, degraded by the proteasome; zinc-binding inhibits degradation by the proteasome. In terms of tissue distribution, widely expressed with higher expression in brain (at protein level).

It is found in the golgi outpost. Its subcellular location is the cytoplasm. The protein resides in the cytoskeleton. It localises to the microtubule organizing center. The protein localises to the nucleus. It is found in the spindle. It carries out the reaction GTP + H2O = GDP + phosphate + H(+). Functionally, regulator of microtubule dynamics that plays a key role in myelination by promoting elongation of the myelin sheath. Acts as a microtubule nucleation factor in oligodendrocytes: specifically localizes to the postsynaptic Golgi apparatus region, also named Golgi outpost, and promotes microtubule nucleation, an important step for elongation of the myelin sheath. Required for both uniform polarized growth of distal microtubules as well as directing the branching of proximal processes. Shows magnesium-dependent GTPase activity; the role of the GTPase activity is unclear. In addition to microtubule nucleation activity, also involved in microtubule bundling and stabilization of existing microtubules, thereby maintaining the integrity of the microtubule network. Regulates microtubule dynamics by promoting tubulin acetylation: acts by inhibiting the tubulin deacetylase activity of HDAC6. Also regulates cell migration: phosphorylation by ROCK1 inhibits interaction with HDAC6, resulting in decreased acetylation of tubulin and increased cell motility. Plays a role in cell proliferation by regulating the G1/S-phase transition. Involved in astral microtubule organization and mitotic spindle orientation during early stage of mitosis; this process is regulated by phosphorylation by LIMK2. This is Tubulin polymerization-promoting protein from Mus musculus (Mouse).